The primary structure comprises 216 residues: MENILKELKFDDRGLIPVITQDYKTNEVLMMAYIMKRPLKKSLETGKVHYFSRSRNKLWLKGETSGHFQLIKSISIDCDADTLLIKVEQVEAACHTGHYSCFYREISGNELKETSDKVFDEQKVYEAENAKILQEIYDVIVDRTIHPKEGSYTNYLFEKGLDKILKKVGEEAAEVIIGAKNRDKGEIVYEISDLIYHLLVLMVERGIKLEDIYEEA.

A phosphoribosyl-AMP cyclohydrolase region spans residues 1–132 (MENILKELKF…KVYEAENAKI (132 aa)). The tract at residues 133-216 (LQEIYDVIVD…IKLEDIYEEA (84 aa)) is phosphoribosyl-ATP pyrophosphohydrolase.

In the N-terminal section; belongs to the PRA-CH family. This sequence in the C-terminal section; belongs to the PRA-PH family.

It localises to the cytoplasm. It carries out the reaction 1-(5-phospho-beta-D-ribosyl)-ATP + H2O = 1-(5-phospho-beta-D-ribosyl)-5'-AMP + diphosphate + H(+). The catalysed reaction is 1-(5-phospho-beta-D-ribosyl)-5'-AMP + H2O = 1-(5-phospho-beta-D-ribosyl)-5-[(5-phospho-beta-D-ribosylamino)methylideneamino]imidazole-4-carboxamide. The protein operates within amino-acid biosynthesis; L-histidine biosynthesis; L-histidine from 5-phospho-alpha-D-ribose 1-diphosphate: step 2/9. It functions in the pathway amino-acid biosynthesis; L-histidine biosynthesis; L-histidine from 5-phospho-alpha-D-ribose 1-diphosphate: step 3/9. The protein is Histidine biosynthesis bifunctional protein HisIE (hisI) of Thermoanaerobacter pseudethanolicus (strain ATCC 33223 / 39E) (Clostridium thermohydrosulfuricum).